The chain runs to 484 residues: tRNA sulfurtransferase (484 aa).

Positions 63–167 (REMIERLTCT…LDRLFVIHRQ (105 aa)) constitute a THUMP domain. ATP-binding positions include 185–186 (LM), lysine 267, glycine 289, and glutamine 298. A disulfide bond links cysteine 346 and cysteine 457. Residues 405–483 (VLPGQIVIDI…GHTNVRVYRP (79 aa)) form the Rhodanese domain. Cysteine 457 functions as the Cysteine persulfide intermediate in the catalytic mechanism.

The protein belongs to the ThiI family.

Its subcellular location is the cytoplasm. The enzyme catalyses [ThiI sulfur-carrier protein]-S-sulfanyl-L-cysteine + a uridine in tRNA + 2 reduced [2Fe-2S]-[ferredoxin] + ATP + H(+) = [ThiI sulfur-carrier protein]-L-cysteine + a 4-thiouridine in tRNA + 2 oxidized [2Fe-2S]-[ferredoxin] + AMP + diphosphate. The catalysed reaction is [ThiS sulfur-carrier protein]-C-terminal Gly-Gly-AMP + S-sulfanyl-L-cysteinyl-[cysteine desulfurase] + AH2 = [ThiS sulfur-carrier protein]-C-terminal-Gly-aminoethanethioate + L-cysteinyl-[cysteine desulfurase] + A + AMP + 2 H(+). It participates in cofactor biosynthesis; thiamine diphosphate biosynthesis. Catalyzes the ATP-dependent transfer of a sulfur to tRNA to produce 4-thiouridine in position 8 of tRNAs, which functions as a near-UV photosensor. Also catalyzes the transfer of sulfur to the sulfur carrier protein ThiS, forming ThiS-thiocarboxylate. This is a step in the synthesis of thiazole, in the thiamine biosynthesis pathway. The sulfur is donated as persulfide by IscS. This chain is tRNA sulfurtransferase, found in Pseudomonas aeruginosa (strain UCBPP-PA14).